A 194-amino-acid polypeptide reads, in one-letter code: Large ribosomal subunit protein eL15 (194 aa).

Residues 162 to 173 (KTSAGRRARGLH) are compositionally biased toward basic residues. Residues 162–194 (KTSAGRRARGLHNRGTGTEKCRPSLTSHKNQGK) form a disordered region. Residues 185 to 194 (SLTSHKNQGK) show a composition bias toward polar residues.

It belongs to the eukaryotic ribosomal protein eL15 family.

This is Large ribosomal subunit protein eL15 from Methanocorpusculum labreanum (strain ATCC 43576 / DSM 4855 / Z).